Here is a 103-residue protein sequence, read N- to C-terminus: MAKKSLIQREKKRQKLEQKYHLIRQSLKKKIRSKVSSLSLSEKTKMREKLQSLPRNSAPTRLHRRCFLTGRPRANYRDFGLSGHVLREMVYECLLPGATRSSW.

This sequence belongs to the universal ribosomal protein uS14 family. In terms of assembly, part of the 30S ribosomal subunit.

It localises to the plastid. It is found in the chloroplast. Functionally, binds 16S rRNA, required for the assembly of 30S particles. This is Small ribosomal subunit protein uS14c from Lolium perenne (Perennial ryegrass).